The chain runs to 187 residues: ATP-dependent protease subunit HslV (187 aa).

Thr13 is an active-site residue. Positions 172, 175, and 178 each coordinate Na(+).

It belongs to the peptidase T1B family. HslV subfamily. As to quaternary structure, a double ring-shaped homohexamer of HslV is capped on each side by a ring-shaped HslU homohexamer. The assembly of the HslU/HslV complex is dependent on binding of ATP.

The protein resides in the cytoplasm. The catalysed reaction is ATP-dependent cleavage of peptide bonds with broad specificity.. Allosterically activated by HslU binding. In terms of biological role, protease subunit of a proteasome-like degradation complex believed to be a general protein degrading machinery. This is ATP-dependent protease subunit HslV from Caulobacter sp. (strain K31).